Reading from the N-terminus, the 459-residue chain is Putrescine aminotransferase (459 aa).

Pyridoxal 5'-phosphate contacts are provided by residues 150–151 (GT) and glutamine 274. N6-(pyridoxal phosphate)lysine is present on lysine 300. Residue threonine 332 coordinates pyridoxal 5'-phosphate.

This sequence belongs to the class-III pyridoxal-phosphate-dependent aminotransferase family. Putrescine aminotransferase subfamily. Pyridoxal 5'-phosphate is required as a cofactor.

The catalysed reaction is an alkane-alpha,omega-diamine + 2-oxoglutarate = an omega-aminoaldehyde + L-glutamate. The enzyme catalyses putrescine + 2-oxoglutarate = 1-pyrroline + L-glutamate + H2O. It catalyses the reaction cadaverine + 2-oxoglutarate = 5-aminopentanal + L-glutamate. It functions in the pathway amine and polyamine degradation; putrescine degradation; 4-aminobutanal from putrescine (transaminase route): step 1/1. In terms of biological role, catalyzes the aminotransferase reaction from putrescine to 2-oxoglutarate, leading to glutamate and 4-aminobutanal, which spontaneously cyclizes to form 1-pyrroline. This is the first step in one of two pathways for putrescine degradation, where putrescine is converted into 4-aminobutanoate (gamma-aminobutyrate or GABA) via 4-aminobutanal. Also functions as a cadaverine transaminase in a a L-lysine degradation pathway to succinate that proceeds via cadaverine, glutarate and L-2-hydroxyglutarate. This Escherichia coli O17:K52:H18 (strain UMN026 / ExPEC) protein is Putrescine aminotransferase.